A 425-amino-acid polypeptide reads, in one-letter code: Glutamyl-tRNA reductase (425 aa).

Residues 49-52, Ser107, 112-114, and Gln118 each bind substrate; these read TCNR and EPQ. Cys50 acts as the Nucleophile in catalysis. 187–192 serves as a coordination point for NADP(+); it reads GAGETI.

The protein belongs to the glutamyl-tRNA reductase family. Homodimer.

It catalyses the reaction (S)-4-amino-5-oxopentanoate + tRNA(Glu) + NADP(+) = L-glutamyl-tRNA(Glu) + NADPH + H(+). Its pathway is porphyrin-containing compound metabolism; protoporphyrin-IX biosynthesis; 5-aminolevulinate from L-glutamyl-tRNA(Glu): step 1/2. Catalyzes the NADPH-dependent reduction of glutamyl-tRNA(Glu) to glutamate 1-semialdehyde (GSA). The polypeptide is Glutamyl-tRNA reductase (Pseudomonas savastanoi pv. phaseolicola (strain 1448A / Race 6) (Pseudomonas syringae pv. phaseolicola (strain 1448A / Race 6))).